The following is a 302-amino-acid chain: Bifunctional phosphoglucose/phosphomannose isomerase (302 aa).

One can recognise an SIS domain in the interval V27 to P160. G47, S48, S87, S89, T92, and R135 together coordinate D-fructose 6-phosphate. Residues G47, S48, S87, S89, T92, and R135 each coordinate D-glucose 6-phosphate. E203 acts as the Proton acceptor in catalysis. D-fructose 6-phosphate-binding residues include H219 and K298. H219 and K298 together coordinate D-glucose 6-phosphate. The active-site Proton donor is the H219. The Proton acceptor role is filled by K298.

It belongs to the PGI/PMI family. In terms of assembly, homodimer.

Its subcellular location is the cytoplasm. The catalysed reaction is alpha-D-glucose 6-phosphate = beta-D-fructose 6-phosphate. It catalyses the reaction D-mannose 6-phosphate = D-fructose 6-phosphate. Inhibited by 5-phosphoarabinonate (PAB) and 6-phosphogluconate. In terms of biological role, dual specificity isomerase that catalyzes the isomerization of both glucose-6-phosphate and mannose-6-phosphate to fructose-6-phosphate with similar catalytic efficiency. The polypeptide is Bifunctional phosphoglucose/phosphomannose isomerase (Pyrobaculum aerophilum (strain ATCC 51768 / DSM 7523 / JCM 9630 / CIP 104966 / NBRC 100827 / IM2)).